Reading from the N-terminus, the 572-residue chain is Urease subunit alpha (572 aa).

One can recognise a Urease domain in the interval 136-572 (GGIDTHIHFI…VPLGQRYFLF (437 aa)). Residues histidine 141, histidine 143, and lysine 224 each coordinate Ni(2+). Lysine 224 is subject to N6-carboxylysine. Position 226 (histidine 226) interacts with substrate. Histidine 253 and histidine 279 together coordinate Ni(2+). The Proton donor role is filled by histidine 327. Aspartate 367 provides a ligand contact to Ni(2+).

Belongs to the metallo-dependent hydrolases superfamily. Urease alpha subunit family. Heterotrimer of UreA (gamma), UreB (beta) and UreC (alpha) subunits. Three heterotrimers associate to form the active enzyme. It depends on Ni cation as a cofactor. In terms of processing, carboxylation allows a single lysine to coordinate two nickel ions.

The protein localises to the cytoplasm. It carries out the reaction urea + 2 H2O + H(+) = hydrogencarbonate + 2 NH4(+). Its pathway is nitrogen metabolism; urea degradation; CO(2) and NH(3) from urea (urease route): step 1/1. In Haemophilus influenzae (strain ATCC 51907 / DSM 11121 / KW20 / Rd), this protein is Urease subunit alpha.